The primary structure comprises 146 residues: Globin-1 (146 aa).

Positions 9–146 (QLTADVKKDL…KLVAVVQAAL (138 aa)) constitute a Globin domain. H101 is a binding site for heme b.

The protein belongs to the globin family. As to quaternary structure, homodimer.

The protein localises to the cytoplasm. The polypeptide is Globin-1 (Anadara inaequivalvis (Inequivalve ark)).